We begin with the raw amino-acid sequence, 547 residues long: Chaperonin GroEL 1 (547 aa).

ATP contacts are provided by residues 30–33 (TLGP), K51, 87–91 (DGTTT), G415, and D496.

The protein belongs to the chaperonin (HSP60) family. Forms a cylinder of 14 subunits composed of two heptameric rings stacked back-to-back. Interacts with the co-chaperonin GroES.

It localises to the cytoplasm. It carries out the reaction ATP + H2O + a folded polypeptide = ADP + phosphate + an unfolded polypeptide.. Together with its co-chaperonin GroES, plays an essential role in assisting protein folding. The GroEL-GroES system forms a nano-cage that allows encapsulation of the non-native substrate proteins and provides a physical environment optimized to promote and accelerate protein folding. The polypeptide is Chaperonin GroEL 1 (Bradyrhizobium sp. (strain BTAi1 / ATCC BAA-1182)).